A 98-amino-acid polypeptide reads, in one-letter code: DNA-binding protein Fis (98 aa).

Residues 74–93 (QTRAATMLGINRGTLRKKLK) constitute a DNA-binding region (H-T-H motif).

This sequence belongs to the transcriptional regulatory Fis family. As to quaternary structure, homodimer.

Its function is as follows. Activates ribosomal RNA transcription. Plays a direct role in upstream activation of rRNA promoters. The protein is DNA-binding protein Fis of Mannheimia haemolytica (Pasteurella haemolytica).